The sequence spans 352 residues: MLISQRPTLTEEVIAENRSKFTIEPLEPGFGYTLGNSLRRTLLSSIPGAAVTSIRIDGVLHEFTTVPGVKEDVTDIILNLKGLVVSSEEDEPVTMYVRKQGPGTVTAGDIVPPAGVVVHNPDMHIATLNDKGKLEIELVVERGRGYVPAVQNKASGAEIGRIPVDSIYSPVLKVTYKVEATRVEQRTDFDRLILDVETKNSISARDALASAGKTLVELFGLARELNVEAEGIEIGPSPAEADHIASFGLPIEDLDLTVRSYNCLKREGVHTVGELVARTESDLLDIRNFGQKSIDEVKVKLHALGLSLKDSPASFDPSSVVGYDASTGTWSDSGTFSDNDGGEQDYAETEQL.

The alpha N-terminal domain (alpha-NTD) stretch occupies residues 1–226; it reads MLISQRPTLT…ELFGLARELN (226 aa). The interval 243-352 is alpha C-terminal domain (alpha-CTD); that stretch reads HIASFGLPIE…EQDYAETEQL (110 aa). Residues 324 to 352 form a disordered region; the sequence is DASTGTWSDSGTFSDNDGGEQDYAETEQL. Residues 326–338 show a composition bias toward polar residues; the sequence is STGTWSDSGTFSD. Over residues 340-352 the composition is skewed to acidic residues; the sequence is DGGEQDYAETEQL.

This sequence belongs to the RNA polymerase alpha chain family. In terms of assembly, homodimer. The RNAP catalytic core consists of 2 alpha, 1 beta, 1 beta' and 1 omega subunit. When a sigma factor is associated with the core the holoenzyme is formed, which can initiate transcription.

The enzyme catalyses RNA(n) + a ribonucleoside 5'-triphosphate = RNA(n+1) + diphosphate. Its function is as follows. DNA-dependent RNA polymerase catalyzes the transcription of DNA into RNA using the four ribonucleoside triphosphates as substrates. The polypeptide is DNA-directed RNA polymerase subunit alpha (Nocardia farcinica (strain IFM 10152)).